The chain runs to 286 residues: Uridylate cyclase (286 aa).

A Guanylate cyclase domain is found at 90-223; sequence TAIFVDIRKS…DAVTKAANMS (134 aa). Phe-93 contacts a ribonucleoside 5'-triphosphate. Mn(2+)-binding residues include Asp-95, Ile-96, and Asp-140.

Belongs to the adenylyl cyclase class-4/guanylyl cyclase family. Pyrimidine cyclase subfamily. In terms of assembly, homodimer. Mn(2+) serves as cofactor.

The protein resides in the cytoplasm. The enzyme catalyses UTP = 3',5'-cyclic UMP + diphosphate. Functionally, pycsar (pyrimidine cyclase system for antiphage resistance) provides immunity against bacteriophage. The pyrimidine cyclase (PycC) synthesizes cyclic nucleotides in response to infection; these serve as specific second messenger signals. The signals activate the adjacent effector, leading to bacterial cell death and abortive phage infection. A clade C Pycsar system. Its function is as follows. The pyrimidine cyclase gene of a two-gene Pycsar system, weakly generates cyclic UMP (cUMP) from UTP, has little to no activity on ATP, CTP or GTP. Expression of this and adjacent effector TpPycTM (AC A0A1T4LJG1) probably confers resistance to bacteriophage. The genes are probably only expressed in response to bacteriophage infection. This Treponema porcinum protein is Uridylate cyclase.